Here is a 262-residue protein sequence, read N- to C-terminus: MKNLSIIANWKLNGNKNTITNSLINLTTQLTNIPQYIKIAIAPPILYIDMVKNHLTSYNNKTIELCSQNVDIHLSGAFTGDISASMLKDLSVKYVLIGHSERRIYHKENNSLIAQKFSIIKQTELIPILCIGENKEERDSGSTQSICIQQIDSIIKLVGIKAFENTIIAYEPVWAIGSGSSASPRNVQSIHQFIRNYIAQYDKTIANQISIQYGGSITTDNVLEFITQKDIDGVLVGSASLDIRNLIKIINLSSNLIKKTYQ.

Substrate is bound at residue 9 to 11 (NWK). Catalysis depends on H99, which acts as the Electrophile. The active-site Proton acceptor is E171. Positions 177 and 216 each coordinate substrate.

It belongs to the triosephosphate isomerase family. As to quaternary structure, homodimer.

It is found in the cytoplasm. The catalysed reaction is D-glyceraldehyde 3-phosphate = dihydroxyacetone phosphate. The protein operates within carbohydrate biosynthesis; gluconeogenesis. Its pathway is carbohydrate degradation; glycolysis; D-glyceraldehyde 3-phosphate from glycerone phosphate: step 1/1. Its function is as follows. Involved in the gluconeogenesis. Catalyzes stereospecifically the conversion of dihydroxyacetone phosphate (DHAP) to D-glyceraldehyde-3-phosphate (G3P). The polypeptide is Triosephosphate isomerase (Blochmanniella floridana).